Consider the following 465-residue polypeptide: Sodium-dependent phosphate transport protein 1 (465 aa).

N-linked (GlcNAc...) asparagine glycans are attached at residues N47 and N56. 10 helical membrane passes run 79–99, 109–129, 171–191, 198–218, 255–275, 304–324, 337–357, 363–383, 399–419, and 428–448; these read GIIF…VGYI, IGFA…AAAV, MSLS…GIIC, MVFY…FVLY, AMIK…YLWT, LPYL…DFLM, LFTA…LYLS, TITF…GALI, VTTL…GLFL, and FKIF…YLIF.

It belongs to the major facilitator superfamily. Sodium/anion cotransporter family. Interacts with PDZK1. In terms of tissue distribution, kidney cortex and liver.

The protein resides in the apical cell membrane. The catalysed reaction is 3 Na(+)(out) + phosphate(out) = 3 Na(+)(in) + phosphate(in). It catalyses the reaction urate(out) = urate(in). Its function is as follows. Important for the resorption of phosphate by the kidney. May be involved in actively transporting phosphate into cells via Na(+) cotransport in the renal brush border membrane. Plays a role in urate transport in the kidney. This is Sodium-dependent phosphate transport protein 1 (SLC17A1) from Oryctolagus cuniculus (Rabbit).